The sequence spans 1487 residues: Collagen alpha-1(II) chain (1487 aa).

A signal peptide spans 1–25 (MIRLGAPQSLVLLTLLIAAVLRCQG). The propeptide at 26–181 (QDAQEAGSCL…PGLSAGNFAA (156 aa)) is N-terminal propeptide. The 58-residue stretch at 32-89 (GSCLQNGQRYKDKDVWKPSSCRICVCDTGNVLCDDIICEDPDCLNPEIPFGECCPICP) folds into the VWFC domain. Residues 96-179 (SGKLGPKGQK…GPPGLSAGNF (84 aa)) are disordered. Composition is skewed to basic and acidic residues over residues 104–115 (QKGEPGDIRDII) and 132–153 (PRGDRGDKGEKGAPGPRGRDGE). Residues 157–172 (PGNPGPAGPPGPPGPP) are compositionally biased toward pro residues. Lys-190 carries the 5-hydroxylysine modification. O-linked (Gal...) hydroxylysine glycosylation is present at Lys-190. A disordered region spans residues 191 to 1237 (AGGAQMGVMQ…QREKGPDPMQ (1047 aa)). Residues 192–203 (GGAQMGVMQGPM) are compositionally biased toward low complexity. Positions 201–1214 (GPMGPMGPRG…PGPPGPPGPP (1014 aa)) are triple-helical region. The segment covering 208–217 (PRGPPGPAGA) has biased composition (pro residues). Low complexity predominate over residues 218–239 (PGPQGFQGNPGEPGEPGVSGPM). The span at 251–265 (PGDDGEAGKPGKSGE) shows a compositional bias: basic and acidic residues. 5-hydroxylysine is present on residues Lys-287, Lys-299, and Lys-308. Lys-287, Lys-299, and Lys-308 each carry an O-linked (Gal...) hydroxylysine glycan. 2 stretches are compositionally biased toward low complexity: residues 310–320 (ESGSPGENGSP) and 335–350 (TGPAGAAGARGNDGQP). The segment covering 360–369 (GPAGGPGFPG) has biased composition (gly residues). Composition is skewed to low complexity over residues 370–382 (APGAKGEAGPTGA) and 403–431 (PAGASGNPGTDGIPGAKGSAGAPGIAGAP). At Lys-374 the chain carries 5-hydroxylysine. The O-linked (Gal...) hydroxylysine glycan is linked to Lys-374. Residues 433–442 (FPGPRGPPGP) are compositionally biased toward pro residues. The span at 472 to 485 (ETGPAGPQGAPGPA) shows a compositional bias: low complexity. 5-hydroxylysine is present on residues Lys-608 and Lys-620. O-linked (Gal...) hydroxylysine glycosylation is found at Lys-608 and Lys-620. Residues 622-631 (LAGAPGLRGL) are compositionally biased toward low complexity. 4-hydroxyproline is present on residues Pro-659 and Pro-668. Residue Pro-670 is modified to 3-hydroxyproline. Residues Pro-671 and Pro-674 each carry the 4-hydroxyproline modification. Residues 706-736 (ERGSPGAQGLQGPRGLPGTPGTDGPKGAAGP) show a composition bias toward low complexity. Positions 764 to 775 (KGDRGDVGEKGP) are enriched in basic and acidic residues. Composition is skewed to low complexity over residues 833–848 (AGFAGPPGADGQPGAK) and 877–914 (PTGVTGPKGARGAQGPPGATGFPGAAGRVGPPGANGNP). Pro-907 carries the 3-hydroxyproline modification. 3 positions are modified to 4-hydroxyproline: Pro-908, Pro-914, and Pro-920. The span at 962 to 980 (DGPSGLDGPPGPQGLAGQR) shows a compositional bias: low complexity. Positions 1069 to 1079 (APGPPGSPGPA) are enriched in pro residues. The span at 1115 to 1129 (RGDKGESGEQGERGL) shows a compositional bias: basic and acidic residues. Pro-1144 is modified (3-hydroxyproline). Composition is skewed to low complexity over residues 1148–1157 (SGDQGASGPA) and 1171–1181 (PSGKDGSNGIP). At Pro-1181 the chain carries 4-hydroxyproline. Pro-1186 carries the 3-hydroxyproline modification. 4-hydroxyproline is present on Pro-1187. Over residues 1199 to 1216 (VGPPGSPGPPGPPGPPGP) the composition is skewed to pro residues. Pro-1201 bears the 3-hydroxyproline mark. Pro-1202 and Pro-1205 each carry 4-hydroxyproline. At Pro-1207 the chain carries 3-hydroxyproline. 4-hydroxyproline occurs at positions 1208 and 1211. Residue Pro-1213 is modified to 3-hydroxyproline. Pro-1214 is modified (4-hydroxyproline). A nonhelical region (C-terminal) region spans residues 1215–1241 (GPGIDMSAFAGLGQREKGPDPMQYMRA). The 235-residue stretch at 1253-1487 (VEVDATLKSL…GVDIGPVCFL (235 aa)) folds into the Fibrillar collagen NC1 domain. Disulfide bonds link Cys-1283–Cys-1315, Cys-1323–Cys-1485, and Cys-1393–Cys-1438. Residues Asp-1301, Asn-1303, Gln-1304, Cys-1306, and Asp-1309 each contribute to the Ca(2+) site.

Belongs to the fibrillar collagen family. As to quaternary structure, homotrimers of alpha 1(II) chains. In terms of processing, contains mostly 4-hydroxyproline. Prolines at the third position of the tripeptide repeating unit (G-X-P) are 4-hydroxylated in some or all of the chains. Contains 3-hydroxyproline at a few sites. This modification occurs on the first proline residue in the sequence motif Gly-Pro-Hyp, where Hyp is 4-hydroxyproline. Post-translationally, lysine residues at the third position of the tripeptide repeating unit (G-X-Y) are 5-hydroxylated in some or all of the chains. In terms of processing, O-glycosylated on hydroxylated lysine residues. The O-linked glycan consists of a Glc-Gal disaccharide.

It localises to the secreted. Its subcellular location is the extracellular space. The protein resides in the extracellular matrix. Its function is as follows. Type II collagen is specific for cartilaginous tissues. It is essential for the normal embryonic development of the skeleton, for linear growth and for the ability of cartilage to resist compressive forces. This Mus musculus (Mouse) protein is Collagen alpha-1(II) chain.